The sequence spans 72 residues: DNA-directed RNA polymerase subunit Rpo10 (72 aa).

The Zn(2+) site is built by cysteine 7, cysteine 10, cysteine 53, and cysteine 54.

The protein belongs to the archaeal Rpo10/eukaryotic RPB10 RNA polymerase subunit family. Part of the RNA polymerase complex. The cofactor is Zn(2+).

It localises to the cytoplasm. The enzyme catalyses RNA(n) + a ribonucleoside 5'-triphosphate = RNA(n+1) + diphosphate. DNA-dependent RNA polymerase (RNAP) catalyzes the transcription of DNA into RNA using the four ribonucleoside triphosphates as substrates. In Thermoplasma acidophilum (strain ATCC 25905 / DSM 1728 / JCM 9062 / NBRC 15155 / AMRC-C165), this protein is DNA-directed RNA polymerase subunit Rpo10.